Reading from the N-terminus, the 256-residue chain is Cell division protein DivIB (256 aa).

Topologically, residues 1 to 23 (MSKDLISTDEYIKIKKKRKRIKK) are cytoplasmic. Residues 24-44 (IVVLFIFLISILVTLCLKIPY) form a helical membrane-spanning segment. The region spanning 45 to 113 (FNIESIEIKG…NKLQIYVKER (69 aa)) is the POTRA domain. Over 45–256 (FNIESIEIKG…EGNPVFYIEK (212 aa)) the chain is Extracellular.

This sequence belongs to the FtsQ/DivIB family. DivIB subfamily.

The protein resides in the cell membrane. Functionally, cell division protein that may be involved in stabilizing or promoting the assembly of the division complex. The chain is Cell division protein DivIB from Clostridium botulinum (strain Hall / ATCC 3502 / NCTC 13319 / Type A).